A 531-amino-acid chain; its full sequence is Protein tweety homolog 2-like (531 aa).

The Extracellular portion of the chain corresponds to 1-44 (MASSRQDYIAPWWTYWLHNFPHLNFNFQTVDNTFKPEDASYQQS). The chain crosses the membrane as a helical span at residues 45–65 (LVFLACVSAVALGLCLLLLSV). At 66–87 (YLTCLCCCRREEDEEVKRPDTC) the chain is on the cytoplasmic side. Residues 88-108 (CVTWAAVITGLVICSAVGVGF) form a helical membrane-spanning segment. Topologically, residues 109–213 (YGNSETNDGV…RTAFIEYYRW (105 aa)) are extracellular. The N-linked (GlcNAc...) asparagine glycan is linked to Asn-129. A helical membrane pass occupies residues 214–234 (LTYLLLLILDLVICLLACLAL). Residues 235–239 (AKQSR) are Cytoplasmic-facing. The chain crosses the membrane as a helical span at residues 240-260 (WLLTVIMVCGMLTLIMSWASL). Over 261-389 (GAGTATAVGT…GVCYDGVEGL (129 aa)) the chain is Extracellular. Asn-283 and Asn-352 each carry an N-linked (GlcNAc...) asparagine glycan. Residues 390 to 410 (LYLCLFSLLAACAFCALLCAV) form a helical membrane-spanning segment. Residues 411-531 (PRAWMLIAIR…IRHFGTDFQV (121 aa)) lie on the Cytoplasmic side of the membrane.

Belongs to the tweety family.

It is found in the cell membrane. In terms of biological role, probable large-conductance Ca(2+)-activated chloride channel. The polypeptide is Protein tweety homolog 2-like (ttyh2l) (Danio rerio (Zebrafish)).